Consider the following 438-residue polypeptide: Cyanidin-3-O-glucoside 2-O-glucuronosyltransferase (438 aa).

UDP-alpha-D-glucuronate is bound by residues S264, 315-316 (WV), 333-341 (HCGWSSTME), and 355-358 (QFDQ).

This sequence belongs to the UDP-glycosyltransferase family. As to quaternary structure, monomer. In terms of tissue distribution, expressed in petals. Not detected in sepals, stems, leaves, tubular corollas and white petals.

It is found in the cytoplasm. The catalysed reaction is cyanidin 3-O-beta-D-glucoside + UDP-alpha-D-glucuronate = cyanidin 3-O-(2-O-beta-D-glucuronosyl)-beta-D-glucoside + UDP + H(+). With respect to regulation, inhibited by copper, mercury, UDP, UTP and partially by calcium, cadmium, iron and UMP. Not affected by cobalt, magnesium, manganese, zinc, nickel, tin, uridine, sadium malonate and glucose. In terms of biological role, involved in the production of glucuronosylated anthocyanins that are the origin of the red coloration of flowers. Can use cyanidin 3-O-6''-O-malonylglucoside, cyanidin 3-O-glucoside and delphinidin 3-O-glucosideas substrates, but not pelargonidin 3-O-glucoside, cyanidin 3-O-3'',6''-O-dimalonylglucoside, pelargonidin 3,5-O-diglucoside, pelargonidin 3-O-6''-O-malonylglucoside-5-O-glucoside, quercetin 3-O-glucoside, quercetin 3-O-6''-O-malonylglucoside, daidzin, genistin,7-O-6''-O-malonylglucosides of daidzein and genistein, cyanidin, quercetin, daidzein, genistein p-Nitrophenyl beta-D-glucopyranoside, beta-estradiol, 17alpha-estradiol, 1-naphthol, 2-naphthol, 4-methylumbelliferone, and p-nitrophenol. Highly specific for UDP-glucuronate (UDP-GlcUA). Arg-25 is decisive with respect to UDP-sugar specificity. The sequence is that of Cyanidin-3-O-glucoside 2-O-glucuronosyltransferase (UGAT) from Bellis perennis (English daisy).